The sequence spans 248 residues: Triosephosphate isomerase (248 aa).

2 residues coordinate substrate: Asn-10 and Lys-12. His-95 acts as the Electrophile in catalysis. The Proton acceptor role is filled by Glu-165.

The protein belongs to the triosephosphate isomerase family. As to quaternary structure, homodimer.

The catalysed reaction is D-glyceraldehyde 3-phosphate = dihydroxyacetone phosphate. It functions in the pathway carbohydrate biosynthesis; gluconeogenesis. The protein operates within carbohydrate degradation; glycolysis; D-glyceraldehyde 3-phosphate from glycerone phosphate: step 1/1. The sequence is that of Triosephosphate isomerase (TPI1) from Debaryomyces hansenii (strain ATCC 36239 / CBS 767 / BCRC 21394 / JCM 1990 / NBRC 0083 / IGC 2968) (Yeast).